The following is a 500-amino-acid chain: Maturase K (500 aa).

Belongs to the intron maturase 2 family. MatK subfamily.

Its subcellular location is the plastid. It is found in the chloroplast. Usually encoded in the trnK tRNA gene intron. Probably assists in splicing its own and other chloroplast group II introns. This is Maturase K from Helianthus annuus (Common sunflower).